Here is a 291-residue protein sequence, read N- to C-terminus: uncharacterized protein (291 aa).

6 consecutive transmembrane segments (helical) span residues 13–33, 40–60, 81–101, 128–148, 158–178, and 220–240; these read FDLFFAAIACICGILKVMEMG, LGTVSKNGMAVLAVLVALGFL, GFLNPCVILSVIEFFMMLICI, FGLFGAIFMPYIFAECIRLLL, VILGILVLGCLAMAGLAYLEY, and GNVWMYLAMFASFTLVLILLA. Residue asparagine 249 is glycosylated (N-linked (GlcNAc...) asparagine). Residues 269-291 are disordered; that stretch reads MASEDPPKDPLPRQEGGGGDTIA.

It is found in the membrane. This is an uncharacterized protein from Encephalitozoon cuniculi (strain GB-M1) (Microsporidian parasite).